Reading from the N-terminus, the 250-residue chain is Ditrans,polycis-undecaprenyl-diphosphate synthase ((2E,6E)-farnesyl-diphosphate specific) (250 aa).

The active site involves Asp-27. Asp-27 contacts Mg(2+). Residues 28–31 (GNGR), Trp-32, Arg-40, His-44, and 72–74 (SSE) each bind substrate. The Proton acceptor role is filled by Asn-75. The substrate site is built by Trp-76, Arg-78, and Arg-195. His-200 serves as a coordination point for Mg(2+). 201–203 (RIS) is a substrate binding site. Glu-214 provides a ligand contact to Mg(2+).

It belongs to the UPP synthase family. Homodimer. Mg(2+) is required as a cofactor.

The catalysed reaction is 8 isopentenyl diphosphate + (2E,6E)-farnesyl diphosphate = di-trans,octa-cis-undecaprenyl diphosphate + 8 diphosphate. Catalyzes the sequential condensation of isopentenyl diphosphate (IPP) with (2E,6E)-farnesyl diphosphate (E,E-FPP) to yield (2Z,6Z,10Z,14Z,18Z,22Z,26Z,30Z,34E,38E)-undecaprenyl diphosphate (di-trans,octa-cis-UPP). UPP is the precursor of glycosyl carrier lipid in the biosynthesis of bacterial cell wall polysaccharide components such as peptidoglycan and lipopolysaccharide. This chain is Ditrans,polycis-undecaprenyl-diphosphate synthase ((2E,6E)-farnesyl-diphosphate specific), found in Blochmanniella floridana.